The sequence spans 556 residues: Potassium-transporting ATPase potassium-binding subunit (556 aa).

A run of 10 helical transmembrane segments spans residues 1-21 (MTWI…GIAQ), 60-80 (SYAR…YALQ), 130-150 (GLCV…VALI), 173-193 (LRIL…GGAV), 245-265 (PQPW…FSLP), 281-301 (ILAA…AAEF), 374-394 (GLYG…LLVG), 416-436 (ILVM…VPGL), 482-502 (AALG…ILAL), and 529-549 (LIVF…LTLG).

It belongs to the KdpA family. As to quaternary structure, the system is composed of three essential subunits: KdpA, KdpB and KdpC.

Its subcellular location is the cell membrane. Functionally, part of the high-affinity ATP-driven potassium transport (or Kdp) system, which catalyzes the hydrolysis of ATP coupled with the electrogenic transport of potassium into the cytoplasm. This subunit binds the extracellular potassium ions and delivers the ions to the membrane domain of KdpB through an intramembrane tunnel. This is Potassium-transporting ATPase potassium-binding subunit from Cutibacterium acnes (strain DSM 16379 / KPA171202) (Propionibacterium acnes).